We begin with the raw amino-acid sequence, 487 residues long: 2-succinylbenzoate--CoA ligase (487 aa).

Belongs to the ATP-dependent AMP-binding enzyme family. MenE subfamily.

It catalyses the reaction 2-succinylbenzoate + ATP + CoA = 2-succinylbenzoyl-CoA + AMP + diphosphate. The protein operates within quinol/quinone metabolism; 1,4-dihydroxy-2-naphthoate biosynthesis; 1,4-dihydroxy-2-naphthoate from chorismate: step 5/7. Its pathway is quinol/quinone metabolism; menaquinone biosynthesis. Converts 2-succinylbenzoate (OSB) to 2-succinylbenzoyl-CoA (OSB-CoA). This Bacillus velezensis (strain DSM 23117 / BGSC 10A6 / LMG 26770 / FZB42) (Bacillus amyloliquefaciens subsp. plantarum) protein is 2-succinylbenzoate--CoA ligase.